The chain runs to 95 residues: Toxin Tbo-IT2 (95 aa).

The N-terminal stretch at 1-23 (MTMKTLCLSLIVIGVLILVAVKA) is a signal peptide. Residues 24 to 53 (EDYVNINSLEEAPEENVNINNLEETPEESR) constitute a propeptide that is removed on maturation. 5 cysteine pairs are disulfide-bonded: Cys-54-Cys-68, Cys-61-Cys-73, Cys-67-Cys-84, Cys-70-Cys-92, and Cys-75-Cys-82. Cys-92 is subject to Cysteine amide.

Belongs to the neurotoxin 02 (plectoxin) family. 02 (plectoxin) subfamily. As to expression, expressed by the venom gland.

The protein resides in the secreted. This recombinant (non-amidated) toxin shows insecticidal activity on larvae of the housefly Musca domestica and has no activity on a panel of expressed neuronal receptors and ion channels. This is Toxin Tbo-IT2 from Tibellus oblongus (Oblong running crab spider).